A 428-amino-acid chain; its full sequence is C4-dicarboxylate transport protein (428 aa).

8 helical membrane-spanning segments follow: residues 8 to 28, 44 to 64, 78 to 98, 148 to 168, 184 to 204, 222 to 242, 307 to 327, and 355 to 375; these read VLYV…HYYP, LIKM…IAGM, LLYF…ATHI, GEIL…AHLG, VLFG…FGAM, LIGT…GAIA, IYMT…LTWM, and AATL…ILGI.

The protein belongs to the dicarboxylate/amino acid:cation symporter (DAACS) (TC 2.A.23) family.

The protein resides in the cell inner membrane. Its function is as follows. Responsible for the transport of dicarboxylates such as succinate, fumarate, and malate from the periplasm across the membrane. The polypeptide is C4-dicarboxylate transport protein (Burkholderia pseudomallei (strain 1106a)).